The following is a 215-amino-acid chain: Rod-determining factor A (215 aa).

Functionally, involved in cell-shape determination. Required for the formation of rods and wild-type-like motility. The polypeptide is Rod-determining factor A (Haloferax volcanii (strain ATCC 29605 / DSM 3757 / JCM 8879 / NBRC 14742 / NCIMB 2012 / VKM B-1768 / DS2) (Halobacterium volcanii)).